The primary structure comprises 278 residues: Fasciclin-like arabinogalactan protein 5 (278 aa).

A signal peptide spans 1-24; it reads MGLKASLSLLSLTILLVFSKVVTA. Residues 25–169 enclose the FAS1 domain; the sequence is NNITLAFQKY…LSIIQITMPI (145 aa). Residues asparagine 26, asparagine 74, asparagine 126, and asparagine 159 are each glycosylated (N-linked (GlcNAc...) asparagine). Residues 199–257 form a disordered region; the sequence is VVPAPGPAADDNSPDSAVPKTPPAPATDTPEADSPAPAPSADNEKIEAADKAKPSSSAS. Low complexity predominate over residues 224–239; the sequence is ATDTPEADSPAPAPSA. Over residues 240-251 the composition is skewed to basic and acidic residues; sequence DNEKIEAADKAK. Serine 255 is lipidated: GPI-anchor amidated serine. The propeptide at 256 to 278 is removed in mature form; that stretch reads ASKAGWSFDVILLLAFLASFAGF.

It belongs to the fasciclin-like AGP family.

The protein resides in the cell membrane. Its function is as follows. May be a cell surface adhesion protein. The sequence is that of Fasciclin-like arabinogalactan protein 5 (FLA5) from Arabidopsis thaliana (Mouse-ear cress).